The sequence spans 76 residues: Beta-defensin 121 (76 aa).

Positions 1-15 (MKLLLLLLTVTLLLA) are cleaved as a signal peptide. Cystine bridges form between Cys23-Cys50, Cys30-Cys44, and Cys34-Cys51.

This sequence belongs to the beta-defensin family. Abundant expression in the male reproductive tract only.

The protein resides in the secreted. Its function is as follows. Has antibacterial activity. This Macaca mulatta (Rhesus macaque) protein is Beta-defensin 121 (DEFB121).